Here is a 143-residue protein sequence, read N- to C-terminus: Putative nickel-responsive regulator (143 aa).

Ni(2+)-binding residues include H82, H97, H99, and C105.

It belongs to the transcriptional regulatory CopG/NikR family. Ni(2+) is required as a cofactor.

In terms of biological role, transcriptional regulator. This chain is Putative nickel-responsive regulator, found in Helicobacter hepaticus (strain ATCC 51449 / 3B1).